The following is a 219-amino-acid chain: Izumo sperm-egg fusion protein 4 (219 aa).

The signal sequence occupies residues 1 to 15 (MALLLCLVGVTAALA). A glycan (N-linked (GlcNAc...) asparagine) is linked at Asn206.

This sequence belongs to the Izumo family.

Its subcellular location is the secreted. The polypeptide is Izumo sperm-egg fusion protein 4 (IZUMO4) (Macaca fascicularis (Crab-eating macaque)).